A 310-amino-acid chain; its full sequence is Porphobilinogen deaminase (310 aa).

Cysteine 242 is subject to S-(dipyrrolylmethanemethyl)cysteine.

This sequence belongs to the HMBS family. In terms of assembly, monomer. Requires dipyrromethane as cofactor.

It catalyses the reaction 4 porphobilinogen + H2O = hydroxymethylbilane + 4 NH4(+). It participates in porphyrin-containing compound metabolism; protoporphyrin-IX biosynthesis; coproporphyrinogen-III from 5-aminolevulinate: step 2/4. Its function is as follows. Tetrapolymerization of the monopyrrole PBG into the hydroxymethylbilane pre-uroporphyrinogen in several discrete steps. This chain is Porphobilinogen deaminase, found in Psychromonas ingrahamii (strain DSM 17664 / CCUG 51855 / 37).